The sequence spans 489 residues: Probable cytosol aminopeptidase (489 aa).

Residues Lys-254 and Asp-259 each contribute to the Mn(2+) site. Lys-266 is a catalytic residue. Residues Asp-277, Asp-336, and Glu-338 each contribute to the Mn(2+) site. Residue Arg-340 is part of the active site.

Belongs to the peptidase M17 family. Requires Mn(2+) as cofactor.

The protein localises to the cytoplasm. The enzyme catalyses Release of an N-terminal amino acid, Xaa-|-Yaa-, in which Xaa is preferably Leu, but may be other amino acids including Pro although not Arg or Lys, and Yaa may be Pro. Amino acid amides and methyl esters are also readily hydrolyzed, but rates on arylamides are exceedingly low.. It carries out the reaction Release of an N-terminal amino acid, preferentially leucine, but not glutamic or aspartic acids.. In terms of biological role, presumably involved in the processing and regular turnover of intracellular proteins. Catalyzes the removal of unsubstituted N-terminal amino acids from various peptides. The chain is Probable cytosol aminopeptidase from Cereibacter sphaeroides (strain ATCC 17025 / ATH 2.4.3) (Rhodobacter sphaeroides).